The primary structure comprises 396 residues: 2-(3-amino-3-carboxypropyl)histidine synthase subunit 1 (396 aa).

3 residues coordinate [4Fe-4S] cluster: cysteine 89, cysteine 194, and cysteine 323. A disordered region spans residues 372–396; it reads TNNNEANRPKREKRKPHIVVRTEAS.

The protein belongs to the DPH1/DPH2 family. DPH1 subfamily. Component of the 2-(3-amino-3-carboxypropyl)histidine synthase complex composed of dph-1, dph-2, dph-3 and a NADH-dependent reductase. [4Fe-4S] cluster is required as a cofactor.

It carries out the reaction L-histidyl-[translation elongation factor 2] + S-adenosyl-L-methionine = 2-[(3S)-amino-3-carboxypropyl]-L-histidyl-[translation elongation factor 2] + S-methyl-5'-thioadenosine + H(+). It participates in protein modification; peptidyl-diphthamide biosynthesis. Functionally, catalyzes the first step of diphthamide biosynthesis, a post-translational modification of histidine which occurs in elongation factor 2. Dph-1 and dph-2 transfer a 3-amino-3-carboxypropyl (ACP) group from S-adenosyl-L-methionine (SAM) to a histidine residue, the reaction is assisted by a reduction system comprising dph-3 and a NADH-dependent reductase. This is 2-(3-amino-3-carboxypropyl)histidine synthase subunit 1 (dph-1) from Caenorhabditis elegans.